Here is a 496-residue protein sequence, read N- to C-terminus: Stomatal closure-related actin-binding protein 1 (496 aa).

Positions 126–269 (RNKDDVEEAI…FLQLQKKLAM (144 aa)) form a coiled coil.

It belongs to the SCAB family. As to quaternary structure, dimer. Dimerization is required for actin-binding activity. As to expression, expressed in roots, stems, leaves, flowers, siliques and guard cells.

The protein localises to the cytoplasm. The protein resides in the cytoskeleton. In terms of biological role, plant-specific actin binding protein that bundles and stabilizes microfilaments (MFs). Has no nucleation or capping activity. Regulates MF reorganization during stomatal closure. The binding to F-actin is insensitive to Ca(2+) and pH. Binds weakly to inositol phosphates. The sequence is that of Stomatal closure-related actin-binding protein 1 from Arabidopsis thaliana (Mouse-ear cress).